We begin with the raw amino-acid sequence, 380 residues long: GATOR1 complex protein NPRL2 (380 aa).

Residues 1–133 (MGSGCRIECI…SKQKLVPIMT (133 aa)) are interaction with PDPK1. Residue arginine 78 participates in GDP binding. Arginine 78 carries the asymmetric dimethylarginine modification. Glycyl lysine isopeptide (Lys-Gly) (interchain with G-Cter in ubiquitin) cross-links involve residues lysine 158 and lysine 357.

It belongs to the NPR2 family. Within the GATOR complex, component of the GATOR1 subcomplex, made of DEPDC5, NPRL2 and NPRL3. GATOR1 mediates the strong interaction of the GATOR complex with small GTPases Rag (RagA/RRAGA, RagB/RRAGB, RagC/RRAGC and/or RagD/RRAGD) heterodimers. GATOR1 interacts with GPR155/LYCHOS; interaction takes place in presence of cholesterol and prevents interaction between GATOR1 and KICSTOR. Interacts with PDPK1. In the presence of abundant amino acids, ubiquitinated at Lys-158 and Lys-357 via 'Lys-6'-linked ubiquitination by the WDR24 component of the GATOR2 complex, thereby inhibiting the GATOR1 complex and promoting mTORC1 activation. Post-translationally, asymmetric dimethylation at Arg-78 by PRMT1 inhibits the GTPase activator activity of the GATOR1 complex and consequently inducing timely mTORC1 activation under methionine-sufficient conditions. In terms of tissue distribution, most abundant in skeletal muscle, followed by brain, liver and pancreas, with lower amounts in lung, kidney, placenta and heart. Expressed in the frontal lobe cortex as well as in the temporal, parietal, and occipital lobes. Expressed in most lung cancer cell lines tested.

Its subcellular location is the lysosome membrane. Functionally, catalytic component of the GATOR1 complex, a multiprotein complex that functions as an inhibitor of the amino acid-sensing branch of the mTORC1 pathway. In response to amino acid depletion, the GATOR1 complex has GTPase activating protein (GAP) activity and strongly increases GTP hydrolysis by RagA/RRAGA (or RagB/RRAGB) within heterodimeric Rag complexes, thereby turning them into their inactive GDP-bound form, releasing mTORC1 from lysosomal surface and inhibiting mTORC1 signaling. In the presence of abundant amino acids, the GATOR1 complex is ubiquitinated and inhibited by GATOR2. Within the GATOR1 complex, NPRL2 constitutes the catalytic subunit that mediates the GTPase activator activity and under methionine-sufficient conditions, the GTPase activator activity is inhibited by PRMT1 through methylation and consequently inducing timely mTORC1 activation. In terms of biological role, suppresses Src-dependent tyrosine phosphorylation and activation of PDPK1 and its downstream signaling. Down-regulates PDPK1 kinase activity by interfering with tyrosine phosphorylation at 'Tyr-9', 'Tyr-373' and 'Tyr-376' residues. May act as a tumor suppressor. Suppresses cell growth and enhances sensitivity to various anticancer drugs. The protein is GATOR1 complex protein NPRL2 of Homo sapiens (Human).